Reading from the N-terminus, the 789-residue chain is Aryl hydrocarbon receptor nuclear translocator (789 aa).

Positions 1 to 14 (MAATTANPEMTSDV) are enriched in polar residues. The disordered stretch occupies residues 1–97 (MAATTANPEM…RLARENHSEI (97 aa)). An N-acetylalanine modification is found at alanine 2. The span at 26-35 (SGPGIQGGGA) shows a compositional bias: gly residues. Residue lysine 58 forms a Glycyl lysine isopeptide (Lys-Gly) (interchain with G-Cter in SUMO2) linkage. Over residues 60–97 (LRCDDDQMSNDKERFARSDDEQSSADKERLARENHSEI) the composition is skewed to basic and acidic residues. A Phosphoserine modification is found at serine 77. Residues 88-128 (RLARENHSEIERRRRNKMTAYITELSDMVPTCSALARKPDK) form a DNA-binding region. The bHLH domain maps to 89 to 142 (LARENHSEIERRRRNKMTAYITELSDMVPTCSALARKPDKLTILRMAVSHMKSL). Residues 112 to 168 (LSDMVPTCSALARKPDKLTILRMAVSHMKSLRGTGNTSTDGSYKPSFLTDQELKHLI) are required for heterodimer formation with HIF1A. The tract at residues 112 to 264 (LSDMVPTCSA…MCMGSRRSFI (153 aa)) is required for heterodimer formation with EPAS1. 2 PAS domains span residues 161–235 (DQEL…LTGR) and 349–419 (PNCT…VKLK). Residues 167–171 (LILEA) form a mediates the transcription activity and dimerization of the AHR:ARNT complex region. In terms of domain architecture, PAC spans 424–467 (SVMFRFRSKNQEWLWMRTSSFTFQNPYSDEIEYIICTNTNVKNS). Positions 465 to 481 (KNSSQEPRPTLSNTIQR) are enriched in polar residues. Disordered stretches follow at residues 465–492 (KNSS…NLPL) and 672–789 (TPSS…PFSE). A compositionally biased stretch (low complexity) spans 672-696 (TPSSFSSMSLPGAPTASPGAAAYPS). Residues 708–719 (TGQTAGQFQTRT) are compositionally biased toward polar residues. 2 stretches are compositionally biased toward low complexity: residues 723–733 (VGVWPQWQGQQ) and 743–756 (QHVQ…PGQP).

As to quaternary structure, monomer. Homodimer only upon binding to a DNA. Efficient DNA binding requires dimerization with another bHLH protein. Interacts with TACC3. Interacts with HIF1A, EPAS1, NPAS1 and NPAS3; forms a heterodimer that binds core DNA sequence 5'-TACGTG-3' within the hypoxia response element (HRE) of target gene promoters. Forms a heterodimer with AHRR, as well as with other bHLH proteins. Interacts with NOCA7. Interacts with TACC3. Interacts with AHR; the heterodimer ARNT:AHR binds to core DNA sequence 5'-TGCGTG-3' within the dioxin response element (DRE) of target gene promoters and activates their transcription. Interacts with SIM1 and NPAS4.

Its subcellular location is the nucleus. Functionally, required for activity of the AHR. Upon ligand binding, AHR translocates into the nucleus, where it heterodimerizes with ARNT and induces transcription by binding to xenobiotic response elements (XRE). Not required for the ligand-binding subunit to translocate from the cytosol to the nucleus after ligand binding. The complex initiates transcription of genes involved in the regulation of a variety of biological processes, including angiogenesis, hematopoiesis, drug and lipid metabolism, cell motility and immune modulation. The heterodimer binds to core DNA sequence 5'-TACGTG-3' within the hypoxia response element (HRE) of target gene promoters and functions as a transcriptional regulator of the adaptive response to hypoxia. The heterodimer ARNT:AHR binds to core DNA sequence 5'-TGCGTG-3' within the dioxin response element (DRE) of target gene promoters and activates their transcription. In Homo sapiens (Human), this protein is Aryl hydrocarbon receptor nuclear translocator.